The sequence spans 338 residues: Formamidase (338 aa).

In terms of domain architecture, CN hydrolase spans 14-257; sequence VGIGLVQLQL…NEIITAEVRP (244 aa). Glutamate 60 (proton acceptor) is an active-site residue. The active-site Proton donor is lysine 129. The active-site Nucleophile is the cysteine 162.

Belongs to the carbon-nitrogen hydrolase superfamily. Aliphatic amidase family.

It carries out the reaction formamide + H2O = formate + NH4(+). Is an aliphatic amidase with a restricted substrate specificity, as it only hydrolyzes formamide. The polypeptide is Formamidase (Allorhizobium ampelinum (strain ATCC BAA-846 / DSM 112012 / S4) (Agrobacterium vitis (strain S4))).